The sequence spans 309 residues: MSKIVVALGGNALGQSPEEQLELVKGTAKSLVSLIQKGYEVVISHGNGPQVGSINLGLNYAAENGQGPAFPFPECGAMSQAYIGYQLQESLLNELHVLNIDKQVVTLVTQVEVAGDDQAFNNPTKPIGLFYTKEQAEQTMEEKGYKFVEDSGRGYRRVVPSPMPINIVELDSIETLIKHGTLVIAAGGGGIPVVKEEGNYKGVDAVIDKDKTSALLAAHLKSDQLIILTAVDYVYINYGKDNQEALGEVTVDEMNQHIADGQFAKGSMLPKVEAALQFIEKNPEGSVLITSLEDLGDALDGKIGTLIKK.

It belongs to the carbamate kinase family.

Its subcellular location is the cytoplasm. The enzyme catalyses hydrogencarbonate + NH4(+) + ATP = carbamoyl phosphate + ADP + H2O + H(+). Its pathway is metabolic intermediate metabolism; carbamoyl phosphate degradation; CO(2) and NH(3) from carbamoyl phosphate: step 1/1. This is Carbamate kinase (arcC) from Staphylococcus haemolyticus (strain JCSC1435).